A 1021-amino-acid chain; its full sequence is Ephrin type-B receptor 6 (1021 aa).

The signal sequence occupies residues 1-31 (MATEGAAQLGNRVAGMVCSLWVLLLVSSVLA). Residues 32 to 594 (LEEVLLDTTG…LSSQLPERLS (563 aa)) lie on the Extracellular side of the membrane. In terms of domain architecture, Eph LBD spans 33-237 (EEVLLDTTGE…FSYTCPAVLR (205 aa)). The interval 163–182 (SFPSSSSSSSSSSSAAWAVG) is disordered. Low complexity predominate over residues 166-176 (SSSSSSSSSSS). 2 Fibronectin type-III domains span residues 369-486 (PPSA…TSHE) and 487-582 (VPSA…TLPQ). A glycan (N-linked (GlcNAc...) asparagine) is linked at Asn-480. A helical membrane pass occupies residues 595–615 (LVIGSILGALAFLLLAAITVL). The Cytoplasmic portion of the chain corresponds to 616 to 1021 (AVVFQRKRRG…HLRQQGSVEV (406 aa)). In terms of domain architecture, Protein kinase spans 670 to 919 (IKIEEVIGTG…QLVAAFDKMI (250 aa)). Residue 676 to 684 (IGTGSFGEV) participates in ATP binding. One can recognise an SAM domain in the interval 948–1012 (PCLDSPQAWL…LHHIQLLQQH (65 aa)). Residues 1019–1021 (VEV) carry the PDZ-binding motif.

Belongs to the protein kinase superfamily. Tyr protein kinase family. Ephrin receptor subfamily. In terms of assembly, interacts with CBL and EPHB1. Interacts with FYN; this interaction takes place in a ligand-independent manner. In terms of processing, ligand-binding increases phosphorylation on tyrosine residues. Phosphorylation on tyrosine residues is mediated by transphosphorylation by the catalytically active EPHB1 in a ligand-independent manner. Tyrosine phosphorylation of the receptor may act as a switch on the functional transition from cell adhesion/attraction to de-adhesion/repulsion. Expressed in brain. Expressed in non invasive breast carcinoma cell lines (at protein level). Strong expression in brain and pancreas, and weak expression in other tissues, such as heart, placenta, lung, liver, skeletal muscle and kidney. Expressed in breast non invasive tumors but not in metastatic lesions. Isoform 3 is expressed in cell lines of glioblastomas, anaplastic astrocytomas, gliosarcomas and astrocytomas. Isoform 3 is not detected in normal tissues.

Its subcellular location is the membrane. The protein resides in the secreted. Functionally, kinase-defective receptor for members of the ephrin-B family. Binds to ephrin-B1 and ephrin-B2. Modulates cell adhesion and migration by exerting both positive and negative effects upon stimulation with ephrin-B2. Inhibits JNK activation, T-cell receptor-induced IL-2 secretion and CD25 expression upon stimulation with ephrin-B2. The polypeptide is Ephrin type-B receptor 6 (EPHB6) (Homo sapiens (Human)).